Reading from the N-terminus, the 929-residue chain is LPS-assembly protein LptD (929 aa).

The N-terminal stretch at 1 to 24 (MKLRFIRSAGWLFLLFCLACNARA) is a signal peptide. The disordered stretch occupies residues 26–208 (LPPLSSKPEQ…EAGDEKLRLA (183 aa)). Residues 44–74 (GDDKPVVIDTERIRGHHEYESGTRSESELRS) show a composition bias toward basic and acidic residues. The segment covering 154–164 (RTQSAPRTLSA) has biased composition (polar residues). The span at 181 to 208 (DQDRPGFAEGERIGGHREEAGDEKLRLA) shows a compositional bias: basic and acidic residues.

It belongs to the LptD family. As to quaternary structure, component of the lipopolysaccharide transport and assembly complex. Interacts with LptE and LptA.

Its subcellular location is the cell outer membrane. Functionally, together with LptE, is involved in the assembly of lipopolysaccharide (LPS) at the surface of the outer membrane. The polypeptide is LPS-assembly protein LptD (Nitrosospira multiformis (strain ATCC 25196 / NCIMB 11849 / C 71)).